We begin with the raw amino-acid sequence, 149 residues long: Probable ubiquitin-conjugating enzyme E2 12 (149 aa).

A compositionally biased stretch (basic and acidic residues) spans 1 to 15 (MASKRISRELRDMQR). The disordered stretch occupies residues 1 to 22 (MASKRISRELRDMQRHPPANCS). Residues 1–148 (MASKRISREL…AQKWTQKYAM (148 aa)) enclose the UBC core domain. Cys-86 functions as the Glycyl thioester intermediate in the catalytic mechanism.

The protein belongs to the ubiquitin-conjugating enzyme family. Ubiquitously expressed at very low levels.

It catalyses the reaction S-ubiquitinyl-[E1 ubiquitin-activating enzyme]-L-cysteine + [E2 ubiquitin-conjugating enzyme]-L-cysteine = [E1 ubiquitin-activating enzyme]-L-cysteine + S-ubiquitinyl-[E2 ubiquitin-conjugating enzyme]-L-cysteine.. It functions in the pathway protein modification; protein ubiquitination. Its function is as follows. Accepts the ubiquitin from the E1 complex and catalyzes its covalent attachment to other proteins. The protein is Probable ubiquitin-conjugating enzyme E2 12 (UBC12) of Arabidopsis thaliana (Mouse-ear cress).